The sequence spans 63 residues: Arabinogalactan protein 41 (63 aa).

A signal peptide spans Met-1–Ala-27. Gln-28 carries the post-translational modification Pyrrolidone carboxylic acid. 3 positions are modified to 4-hydroxyproline: Pro-32, Pro-34, and Pro-36. Residues Pro-32, Pro-34, and Pro-36 are each glycosylated (O-linked (Ara...) hydroxyproline). Ser-38 carries GPI-anchor amidated serine lipidation. The propeptide at Asp-39–His-63 is removed in mature form.

It belongs to the AG-peptide AGP family. In terms of processing, contains 4-hydroxyproline; hydroxylated on Pro-32, Pro-34 and Pro-36. O-glycosylated on hydroxyprolines; noncontiguous hydroxylproline residues are glycosylated with arabinogalactan.

Its subcellular location is the cell membrane. In terms of biological role, proteoglycan that seems to be implicated in diverse developmental roles such as differentiation, cell-cell recognition, embryogenesis and programmed cell death. In Arabidopsis thaliana (Mouse-ear cress), this protein is Arabinogalactan protein 41.